The sequence spans 75 residues: Large ribosomal subunit protein bL31 (75 aa).

Cysteine 16, cysteine 18, cysteine 37, and cysteine 40 together coordinate Zn(2+).

Belongs to the bacterial ribosomal protein bL31 family. Type A subfamily. As to quaternary structure, part of the 50S ribosomal subunit. It depends on Zn(2+) as a cofactor.

Binds the 23S rRNA. The protein is Large ribosomal subunit protein bL31 of Baumannia cicadellinicola subsp. Homalodisca coagulata.